The chain runs to 397 residues: Efflux pump periplasmic linker BepD (397 aa).

The N-terminal stretch at 1–26 is a signal peptide; sequence MTLNRTIRCFAAGAAFIVFAAQPALA. A coiled-coil region spans residues 98–139; that stretch reads APYQAELEKAQAQVAQAEAQYQQSIRDAERAEQLVQQKVQSA.

The protein belongs to the membrane fusion protein (MFP) (TC 8.A.1) family. Probably part of a tripartite efflux pump, which is composed of an outer membrane efflux protein, an inner membrane protein and a protein that expands the periplasmic space. Could form a tripartite pump with BepC and BepE.

Its subcellular location is the periplasm. Involved in resistance to several unrelated toxic compounds, such as dyes, detergents and antibiotics. This is Efflux pump periplasmic linker BepD (bepD) from Brucella suis biovar 1 (strain 1330).